Here is a 248-residue protein sequence, read N- to C-terminus: uncharacterized protein (248 aa).

The first 26 residues, 1 to 26 (MVAPRISPKIVLVGFALFAIISASLA), serve as a signal peptide directing secretion.

This is an uncharacterized protein from Acanthamoeba polyphaga mimivirus (APMV).